Reading from the N-terminus, the 849-residue chain is MASTATQNASTRYSQIWIDQPASLPFQDSINLIKEDKEKWKKEKTAFLIDYDWFEGYVDFIYGEGDNPGPITQWRLLDEKNELKHSLEESIDYSIVSASLWHMLVEWFGLEGLAIERKVLLVGLAAEQKPFVDIYPINFTLHVLFDPINGENTSYSPLYQIDEPYHSDEPYAFSFSRSDTLRSLYKQVMEAFQISDGTSFRLWYLNKSNLSSRFVSLSEFNDQPAIALLSEYAVCMTIFEIDIADGSLLLEFQHPNGEWLSDSITKEQNLTINKEIGLCGLYNLGNSCYMNSALQCMIHTHELTKYFLSDSYEKDINYNNPLGMMGKVALSYASLLKMIHHTADMHSVSPSSFKFIIGEFNTYFSGYRQQDSQEFIAFFLDGLHEDLNRIQIKPYFERPDLFDEHPLHVQRVANQCWDIHTKRNDSIIVQLFQGMYKSTLECSICYQKSTAFDPFMYLTLPLPTSAKWRHKVVYVPPFGTQSPVELYLELLMESTVIQMKFQATEKLQKMGLECGELTACDIYRGKVYKVLKNKDKISKKIHKWDHVVLYGSTANGLTIPIVHGCKRPAMPGSYQSNDVFGFPLQLNVRSRNVLTNDLVKEIVELYRVYAGIDVAIGTLQLGLKRMESKAGKWECIKEIEVKRFEIVEEEEIVIDDKTVIMCLWNDQQYEKLFYNCEWIFEKIQFHMESITLEDCLLEFSKPEQLDLQDSWYCPGCKAFRPATKRLEIWRLPKILVIHLNRFSGHGGDLRRRRKRRDLVVYPVFDLNLKQFLSPFIKDHEWLSSQKSMLYDLYAVDNHHGFMSNGHYTAYARDASSQTFFKFDDTAICEIDPEDIVTSSAYVLFYRAKN.

A DUSP domain is found at 20–120 (QPASLPFQDS…EGLAIERKVL (101 aa)). The 570-residue stretch at 279 to 848 (CGLYNLGNSC…SAYVLFYRAK (570 aa)) folds into the USP domain. The Nucleophile role is filled by C288. Catalysis depends on H806, which acts as the Proton acceptor.

Belongs to the peptidase C19 family.

The enzyme catalyses Thiol-dependent hydrolysis of ester, thioester, amide, peptide and isopeptide bonds formed by the C-terminal Gly of ubiquitin (a 76-residue protein attached to proteins as an intracellular targeting signal).. The polypeptide is Probable ubiquitin carboxyl-terminal hydrolase 1 (ubp1) (Schizosaccharomyces pombe (strain 972 / ATCC 24843) (Fission yeast)).